The following is a 1261-amino-acid chain: Pentatricopeptide repeat-containing protein 5, mitochondrial (1261 aa).

15 PPR repeats span residues 365–404 (HPDL…TSMT), 405–442 (NVRS…NQVI), 443–479 (PSSI…TYKA), 480–514 (SPST…RFSD), 550–584 (TNFT…KVSL), 806–849 (HPEV…EKAN), 852–886 (MALI…GYIP), 887–924 (RAST…NVKP), 925–959 (SVFL…GLLP), 960–995 (TSVT…NYQP), 996–1031 (RVAP…DIEP), 1032–1068 (SSHT…DVPI), 1109–1143 (DANL…NVSL), 1144–1179 (NAYI…MSGK), and 1180–1214 (EPST…RYPL). Residues 1225–1261 (NSHMGQKPKRRSLNTSHSSLASLGNASTQHSINSSIN) form a disordered region. Polar residues predominate over residues 1237 to 1261 (LNTSHSSLASLGNASTQHSINSSIN).

The protein localises to the mitochondrion. In terms of biological role, mitochondrial RNA-binding protein that acts as a general negative regulator of mitochondrial translation. This chain is Pentatricopeptide repeat-containing protein 5, mitochondrial (ppr5), found in Schizosaccharomyces pombe (strain 972 / ATCC 24843) (Fission yeast).